The chain runs to 521 residues: Probable cytochrome P450 12d1 distal, mitochondrial (521 aa).

Residues 1 to 19 constitute a mitochondrion transit peptide; the sequence is MNTLSSARSVAIYVGPVRS. C467 is a binding site for heme.

It belongs to the cytochrome P450 family. Heme serves as cofactor.

Its subcellular location is the mitochondrion membrane. This chain is Probable cytochrome P450 12d1 distal, mitochondrial, found in Drosophila melanogaster (Fruit fly).